The following is a 627-amino-acid chain: Neutral endopeptidase (627 aa).

The 627-residue stretch at 1 to 627 (MTRIQDDLFA…RAPENRLKIW (627 aa)) folds into the Peptidase M13 domain. H475 is a binding site for Zn(2+). Residue E476 is part of the active site. The Zn(2+) site is built by H479 and E535. D539 serves as the catalytic Proton donor.

The protein belongs to the peptidase M13 family. As to quaternary structure, monomer. The cofactor is Zn(2+).

Its subcellular location is the cytoplasm. Functionally, endopeptidase with broad substrate specificity for several oligopeptides. This Lactococcus lactis subsp. cremoris (Streptococcus cremoris) protein is Neutral endopeptidase (pepO).